The sequence spans 161 residues: Large ribosomal subunit protein uL30m (161 aa).

The N-terminal 34 residues, 1–34 (MAGILRLVVQRPPGGLQTVTKGVESLIGTDWIRH), are a transit peptide targeting the mitochondrion.

The protein belongs to the universal ribosomal protein uL30 family. In terms of assembly, component of the mitochondrial ribosome large subunit (39S) which comprises a 16S rRNA and about 50 distinct proteins.

Its subcellular location is the mitochondrion. The polypeptide is Large ribosomal subunit protein uL30m (MRPL30) (Macaca fascicularis (Crab-eating macaque)).